We begin with the raw amino-acid sequence, 318 residues long: Sensor histidine kinase NatK (318 aa).

A run of 3 helical transmembrane segments spans residues 4-24 (LFQC…AAAF), 27-47 (STAA…LYIW), and 72-82 (VGVVLIGTDIM). Positions 132 to 318 (RNHDTMKHIT…RLEIKIPFQK (187 aa)) constitute a Histidine kinase domain. A Phosphohistidine; by autocatalysis modification is found at histidine 134.

It is found in the cell membrane. The catalysed reaction is ATP + protein L-histidine = ADP + protein N-phospho-L-histidine.. Functionally, member of the two-component regulatory system NatK/NatR that positively regulates the expression of the natAB operon. Potentially phosphorylates NatR. This Bacillus subtilis (strain 168) protein is Sensor histidine kinase NatK.